A 553-amino-acid chain; its full sequence is Putative polyamine transporter (553 aa).

11 consecutive transmembrane segments (helical) span residues 43–63 (WSIF…AACF), 68–88 (LVVG…TSVA), 133–153 (ITAA…LHSF), 163–183 (AQIF…ACFP), 190–210 (FSSA…IMIL), 240–260 (WPTG…MSGY), 280–300 (AIVL…IAIA), 333–353 (VIGA…NCLL), 397–417 (LLLL…SIGA), 453–473 (IGWV…FPTV), and 485–505 (WTCL…VVYA).

It belongs to the amino acid-polyamine-organocation (APC) superfamily.

The protein localises to the membrane. The polypeptide is Putative polyamine transporter (GPT1) (Candida albicans (Yeast)).